The chain runs to 391 residues: uncharacterized protein (391 aa).

Residues 235–330 (VFILSRINLL…LYLKNETQKS (96 aa)) enclose the HTH arsR-type domain.

This is an uncharacterized protein from Methanocaldococcus jannaschii (strain ATCC 43067 / DSM 2661 / JAL-1 / JCM 10045 / NBRC 100440) (Methanococcus jannaschii).